The chain runs to 681 residues: DNA-directed RNA polymerase subunit beta' (681 aa).

Residues Cys69, Cys71, Cys87, and Cys90 each coordinate Zn(2+). 3 residues coordinate Mg(2+): Asp490, Asp492, and Asp494.

The protein belongs to the RNA polymerase beta' chain family. RpoC1 subfamily. In plastids the minimal PEP RNA polymerase catalytic core is composed of four subunits: alpha, beta, beta', and beta''. When a (nuclear-encoded) sigma factor is associated with the core the holoenzyme is formed, which can initiate transcription. The cofactor is Mg(2+). Requires Zn(2+) as cofactor.

It is found in the plastid. The protein localises to the chloroplast. It carries out the reaction RNA(n) + a ribonucleoside 5'-triphosphate = RNA(n+1) + diphosphate. Functionally, DNA-dependent RNA polymerase catalyzes the transcription of DNA into RNA using the four ribonucleoside triphosphates as substrates. In Liriodendron tulipifera (Tuliptree), this protein is DNA-directed RNA polymerase subunit beta'.